Consider the following 247-residue polypeptide: 1-(5-phosphoribosyl)-5-[(5-phosphoribosylamino)methylideneamino] imidazole-4-carboxamide isomerase 2 (247 aa).

Catalysis depends on glutamate 8, which acts as the Proton acceptor. The active-site Proton donor is the aspartate 128.

It belongs to the HisA/HisF family.

Its subcellular location is the cytoplasm. It catalyses the reaction 1-(5-phospho-beta-D-ribosyl)-5-[(5-phospho-beta-D-ribosylamino)methylideneamino]imidazole-4-carboxamide = 5-[(5-phospho-1-deoxy-D-ribulos-1-ylimino)methylamino]-1-(5-phospho-beta-D-ribosyl)imidazole-4-carboxamide. The protein operates within amino-acid biosynthesis; L-histidine biosynthesis; L-histidine from 5-phospho-alpha-D-ribose 1-diphosphate: step 4/9. In Ruegeria pomeroyi (strain ATCC 700808 / DSM 15171 / DSS-3) (Silicibacter pomeroyi), this protein is 1-(5-phosphoribosyl)-5-[(5-phosphoribosylamino)methylideneamino] imidazole-4-carboxamide isomerase 2.